Here is a 280-residue protein sequence, read N- to C-terminus: 3-hydroxyanthranilate 3,4-dioxygenase (280 aa).

A domain A (catalytic) region spans residues Met-1–Asp-160. Arg-43 contacts O2. 3 residues coordinate Fe cation: His-47, Glu-53, and His-91. Glu-53 lines the substrate pocket. Substrate contacts are provided by Arg-95 and Glu-105. The tract at residues Pro-161 to Val-177 is linker. Residues Met-178 to Ala-280 form a domain B region.

This sequence belongs to the 3-HAO family. As to quaternary structure, monomer. The cofactor is Fe(2+).

The protein resides in the cytoplasm. It localises to the cytosol. It carries out the reaction 3-hydroxyanthranilate + O2 = (2Z,4Z)-2-amino-3-carboxymuconate 6-semialdehyde. Its pathway is cofactor biosynthesis; NAD(+) biosynthesis; quinolinate from L-kynurenine: step 3/3. In terms of biological role, catalyzes the oxidative ring opening of 3-hydroxyanthranilate to 2-amino-3-carboxymuconate semialdehyde, which spontaneously cyclizes to quinolinate. This chain is 3-hydroxyanthranilate 3,4-dioxygenase (haao), found in Xenopus tropicalis (Western clawed frog).